A 426-amino-acid chain; its full sequence is 3-phosphoshikimate 1-carboxyvinyltransferase (426 aa).

3 residues coordinate 3-phosphoshikimate: Lys22, Ser23, and Arg27. Lys22 contributes to the phosphoenolpyruvate binding site. Phosphoenolpyruvate is bound by residues Gly96 and Arg124. 3-phosphoshikimate contacts are provided by Ser170, Ser171, Gln172, Ser198, Asp314, Asn337, and Lys341. Residue Gln172 coordinates phosphoenolpyruvate. Asp314 (proton acceptor) is an active-site residue. Residues Arg345, Arg387, and Lys412 each coordinate phosphoenolpyruvate.

The protein belongs to the EPSP synthase family. As to quaternary structure, monomer.

It is found in the cytoplasm. The catalysed reaction is 3-phosphoshikimate + phosphoenolpyruvate = 5-O-(1-carboxyvinyl)-3-phosphoshikimate + phosphate. It functions in the pathway metabolic intermediate biosynthesis; chorismate biosynthesis; chorismate from D-erythrose 4-phosphate and phosphoenolpyruvate: step 6/7. Catalyzes the transfer of the enolpyruvyl moiety of phosphoenolpyruvate (PEP) to the 5-hydroxyl of shikimate-3-phosphate (S3P) to produce enolpyruvyl shikimate-3-phosphate and inorganic phosphate. The sequence is that of 3-phosphoshikimate 1-carboxyvinyltransferase from Shewanella oneidensis (strain ATCC 700550 / JCM 31522 / CIP 106686 / LMG 19005 / NCIMB 14063 / MR-1).